The sequence spans 120 residues: Anti-adapter protein IraM (120 aa).

Belongs to the IraM/RssC family.

The protein localises to the cytoplasm. Functionally, involved in the stabilization of the sigma stress factor RpoS. This Salmonella choleraesuis (strain SC-B67) protein is Anti-adapter protein IraM.